The primary structure comprises 512 residues: Serine--tRNA ligase, cytoplasmic (512 aa).

The residue at position 1 (methionine 1) is an N-acetylmethionine. The interval 9-61 (RVDKGGDPALIRETQEKRFKDPGLVDQLVKADSEWRRCRFRADNLNKLKNLCS) is interaction with tRNA. A Phosphoserine modification is found at serine 241. Positions 271 and 302 each coordinate L-serine. Residues 302 to 304 (RQE) and 318 to 321 (VHQF) contribute to the ATP site. Lysine 323 carries the N6-acetyllysine modification. Residue glutamate 325 coordinates L-serine. Position 391-394 (391-394 (ELVS)) interacts with ATP. Asparagine 427 is a binding site for L-serine. The interval 472 to 512 (KPAPIDQEPSKKQKKQHEGSKKKAKEVTLENQLQNMEVTEA) is disordered. Over residues 479-499 (EPSKKQKKQHEGSKKKAKEVT) the composition is skewed to basic and acidic residues. Residues 482-494 (KKQKKQHEGSKKK) carry the Nuclear localization signal motif. Polar residues predominate over residues 500–512 (LENQLQNMEVTEA).

Belongs to the class-II aminoacyl-tRNA synthetase family. Type-1 seryl-tRNA synthetase subfamily. As to quaternary structure, homodimer. The tRNA molecule may bind across the dimer. Interacts with SIRT2. Interacts with METTL6; interaction is required for the tRNA N(3)-methylcytidine methyltransferase activity of METTL6.

Its subcellular location is the cytoplasm. The protein resides in the nucleus. The catalysed reaction is tRNA(Ser) + L-serine + ATP = L-seryl-tRNA(Ser) + AMP + diphosphate + H(+). The enzyme catalyses tRNA(Sec) + L-serine + ATP = L-seryl-tRNA(Sec) + AMP + diphosphate + H(+). The protein operates within aminoacyl-tRNA biosynthesis; selenocysteinyl-tRNA(Sec) biosynthesis; L-seryl-tRNA(Sec) from L-serine and tRNA(Sec): step 1/1. In terms of biological role, catalyzes the attachment of serine to tRNA(Ser) in a two-step reaction: serine is first activated by ATP to form Ser-AMP and then transferred to the acceptor end of tRNA(Ser). Is probably also able to aminoacylate tRNA(Sec) with serine, to form the misacylated tRNA L-seryl-tRNA(Sec), which will be further converted into selenocysteinyl-tRNA(Sec). In the nucleus, binds to the VEGFA core promoter and prevents MYC binding and transcriptional activation by MYC. Recruits SIRT2 to the VEGFA promoter, promoting deacetylation of histone H4 at 'Lys-16' (H4K16). Thereby, inhibits the production of VEGFA and sprouting angiogenesis mediated by VEGFA. The protein is Serine--tRNA ligase, cytoplasmic (Sars1) of Rattus norvegicus (Rat).